Here is a 216-residue protein sequence, read N- to C-terminus: Ribosomal RNA small subunit methyltransferase G (216 aa).

Residues G81, F86, 130–131 (AE), and R144 contribute to the S-adenosyl-L-methionine site.

The protein belongs to the methyltransferase superfamily. RNA methyltransferase RsmG family.

It is found in the cytoplasm. The enzyme catalyses guanosine(527) in 16S rRNA + S-adenosyl-L-methionine = N(7)-methylguanosine(527) in 16S rRNA + S-adenosyl-L-homocysteine. In terms of biological role, specifically methylates the N7 position of guanine in position 527 of 16S rRNA. This Rhodospirillum centenum (strain ATCC 51521 / SW) protein is Ribosomal RNA small subunit methyltransferase G.